The chain runs to 353 residues: GDSL esterase/lipase APG (353 aa).

Residues 1–25 (MDRCTSSFLLLTLVSTLSILQISFA) form the signal peptide. The active-site Nucleophile is Ser37. Asn197 and Asn320 each carry an N-linked (GlcNAc...) asparagine glycan. Active-site residues include Asp328 and His331.

The protein belongs to the 'GDSL' lipolytic enzyme family.

It is found in the secreted. This Arabidopsis thaliana (Mouse-ear cress) protein is GDSL esterase/lipase APG (APG).